Consider the following 135-residue polypeptide: Transcriptional activator protein (135 aa).

Positions 17–32 (KIQHHIAKKRQVRRRR) match the Nuclear localization signal motif. Residues 37–54 (CGCSYYIHLDCINHGFTH) fold into a zinc finger. The segment at 120 to 135 (HLDDLTVSDWSFFKSL) is transactivation.

Belongs to the geminiviridae transcriptional activator protein family. As to quaternary structure, monomer. Homodimer. Homooligomer. Self-interaction correlates with nuclear localization and efficient activation of transcription. Monomers suppress local silencing by interacting with and inactivating host adenosine kinase 2 (ADK2) in the cytoplasm. Interacts with and inhibits host SNF1 kinase. Binds to ssDNA. May interact with host RPS27A. In terms of processing, phosphorylated.

The protein localises to the host nucleus. The protein resides in the host cytoplasm. Its function is as follows. Multifunctional protein that modulates host antiviral defenses and promotes host attractiveness to insect vectors. Acts as a suppressor of RNA-mediated gene silencing, also known as post-transcriptional gene silencing (PTGS), a mechanism of plant viral defense that limits the accumulation of viral RNAs. TrAP suppresses the host RNA silencing by inhibiting adenosine kinase 2 (ADK2), a kinase involved in a general methylation pathway. Also suppresses the host basal defense by interacting with and inhibiting SNF1 kinase, a key regulator of cell metabolism implicated in innate antiviral defense. Functionally, inhibits signal transduction by the phytohormone jasmonate, making the infected plant more attractive to aphids, which are the second host to play a role as a dissemination vector. Acts by binding to ubiquitin precursor RPS27A, thereby preventing ubiquitin degradation of JAZ. The protein is Transcriptional activator protein of Capsicum annuum (Capsicum pepper).